Consider the following 193-residue polypeptide: Sorting nexin-22 (193 aa).

A disordered region spans residues 1 to 21; that stretch reads MLEVHIPSVGPEAEGPRQSPE. The region spanning 1-118 is the PX domain; sequence MLEVHIPSVG…HFPTDPKASN (118 aa). Positions 43, 45, 66, and 79 each coordinate a 1,2-diacyl-sn-glycero-3-phospho-(1D-myo-inositol-3-phosphate).

The protein belongs to the sorting nexin family. As to quaternary structure, (Microbial infection) Interacts with P.falciparum (strain 3D7) CK1. As to expression, expressed in erythrocytes (at protein level).

It is found in the cytoplasmic vesicle membrane. Functionally, may be involved in several stages of intracellular trafficking. Interacts with membranes containing phosphatidylinositol 3-phosphate (PtdIns(3P)). In Homo sapiens (Human), this protein is Sorting nexin-22 (SNX22).